Reading from the N-terminus, the 307-residue chain is tRNA pseudouridine synthase B (307 aa).

The Nucleophile role is filled by Asp-45.

It belongs to the pseudouridine synthase TruB family. Type 1 subfamily.

The enzyme catalyses uridine(55) in tRNA = pseudouridine(55) in tRNA. Responsible for synthesis of pseudouridine from uracil-55 in the psi GC loop of transfer RNAs. This chain is tRNA pseudouridine synthase B, found in Heliobacterium mobile (Heliobacillus mobilis).